A 533-amino-acid chain; its full sequence is Chromosomal replication initiator protein DnaA (533 aa).

The domain I, interacts with DnaA modulators stretch occupies residues 1 to 72 (MNDFWQHCSA…DLARDFWNAP (72 aa)). The segment at 72-196 (PIEVQFVLDP…EAADSMYERS (125 aa)) is domain II. The interval 83-113 (AGQRSPAGATPLAPRAPLPSANPAPVAPGPA) is disordered. Residues 96-110 (PRAPLPSANPAPVAP) are compositionally biased toward pro residues. The domain III, AAA+ region stretch occupies residues 197-413 (KLNPVLTFDN…GALRKILAYS (217 aa)). G241, G243, K244, and T245 together coordinate ATP. The interval 414 to 533 (KFHGREITIE…LHVLEQTLKG (120 aa)) is domain IV, binds dsDNA.

It belongs to the DnaA family. As to quaternary structure, oligomerizes as a right-handed, spiral filament on DNA at oriC.

It localises to the cytoplasm. Functionally, plays an essential role in the initiation and regulation of chromosomal replication. ATP-DnaA binds to the origin of replication (oriC) to initiate formation of the DNA replication initiation complex once per cell cycle. Binds the DnaA box (a 9 base pair repeat at the origin) and separates the double-stranded (ds)DNA. Forms a right-handed helical filament on oriC DNA; dsDNA binds to the exterior of the filament while single-stranded (ss)DNA is stabiized in the filament's interior. The ATP-DnaA-oriC complex binds and stabilizes one strand of the AT-rich DNA unwinding element (DUE), permitting loading of DNA polymerase. After initiation quickly degrades to an ADP-DnaA complex that is not apt for DNA replication. Binds acidic phospholipids. The polypeptide is Chromosomal replication initiator protein DnaA (Burkholderia mallei (strain SAVP1)).